Here is a 61-residue protein sequence, read N- to C-terminus: Metallothionein-1E (61 aa).

Met1 carries the N-acetylmethionine modification. The beta stretch occupies residues 1 to 29; it reads MDPNCSCPTGGSCSCAGSCTCKACRCTSC. 20 residues coordinate a divalent metal cation: Cys5, Cys7, Cys13, Cys15, Cys19, Cys21, Cys24, Cys26, Cys29, Cys33, Cys34, Cys36, Cys37, Cys41, Cys44, Cys48, Cys50, Cys57, Cys59, and Cys60. Positions 30–61 are alpha; sequence KKSCCSCCPVGCAKCAQGCICKGASDKCSCCA.

This sequence belongs to the metallothionein superfamily. Type 1 family. As to quaternary structure, monomer.

Functionally, metallothioneins have a high content of cysteine residues that bind various heavy metals; these proteins are transcriptionally regulated by both heavy metals and glucocorticoids. The chain is Metallothionein-1E (MT1E) from Sus scrofa (Pig).